The following is a 438-amino-acid chain: MHSPIPELPRFERRLTGPRAAPSSPVSTNGSPLNNLVRSRLSDGALNFTGGRIATPLPQPSLKTPESPLSKRNPTIKQNRVRFDLPDDELSRSNVSSPEKTLLTSASTSTFDSLKKELLPELPSLAYSDDDEFPSSPEELNSHVNYPDVRNVYDCHTGLQPLVDHDCIEDRQKTFASKQLPTLPLQKSSKLSNRRPALHSFHSAPANSLYPLPTPTSQLPSNLSSNNLFQSDSLKPSMVSSHTSTKPVLYRGNSEKSCHSCGGSLRAGRIISASGKKLHPQCFKCDTCSQNLEHVGFYYREGKFYCHLDYHEQFSPRCKHCKTPIEDQAVHINNDWFHENHHFCAGCSEVFNVNIPCIYRDDLYWCQTCYDNKYAVKCKKCRKPILGISVKGSDGEYHSQCWTCGACNALLGDEGYFMIENTPICRPCKAISVKFNLD.

Disordered stretches follow at residues 1-37 (MHSP…NNLV) and 49-78 (TGGR…TIKQ). The segment covering 24-37 (SPVSTNGSPLNNLV) has biased composition (polar residues). 2 positions are modified to phosphoserine: serine 67 and serine 96. LIM zinc-binding domains are found at residues 256–316 (KSCH…QFSP), 318–375 (CKHC…NKYA), and 376–435 (VKCK…SVKF).

In Schizosaccharomyces pombe (strain 972 / ATCC 24843) (Fission yeast), this protein is LIM domain-containing protein C4F6.12.